The sequence spans 283 residues: uncharacterized protein (283 aa).

A compositionally biased stretch (polar residues) spans 1–10 (MEVNKTTESL). Disordered stretches follow at residues 1–96 (MEVN…SGGN) and 255–283 (DQEG…EAQI). 2 stretches are compositionally biased toward basic and acidic residues: residues 14–34 (KVEH…RDVK) and 44–81 (SKQE…VSSR).

It belongs to the chlamydial CPn_0705/CT_671/TC_0042 family.

This is an uncharacterized protein from Chlamydia muridarum (strain MoPn / Nigg).